The chain runs to 139 residues: Small ribosomal subunit protein bS6 (139 aa).

Positions 97–139 are disordered; that stretch reads TEASPMAKAKDERDSRRSSEGERRSAPAEATEEVKETAEKAAE. Over residues 104 to 139 the composition is skewed to basic and acidic residues; that stretch reads KAKDERDSRRSSEGERRSAPAEATEEVKETAEKAAE.

It belongs to the bacterial ribosomal protein bS6 family.

Binds together with bS18 to 16S ribosomal RNA. This Shewanella sediminis (strain HAW-EB3) protein is Small ribosomal subunit protein bS6.